A 914-amino-acid polypeptide reads, in one-letter code: Sensor protein TorS (914 aa).

Residues methionine 1 to arginine 8 are Cytoplasmic-facing. Residues leucine 9–tyrosine 29 form a helical membrane-spanning segment. At asparagine 30–serine 332 the chain is on the periplasmic side. The helical transmembrane segment at leucine 333–tyrosine 353 threads the bilayer. The HAMP domain occupies arginine 354–arginine 407. Residues arginine 354 to isoleucine 914 lie on the Cytoplasmic side of the membrane. Residues alanine 450–valine 664 enclose the Histidine kinase domain. Position 453 is a phosphohistidine; by autocatalysis (histidine 453). One can recognise a Response regulatory domain in the interval arginine 683–leucine 798. Aspartate 733 is modified (4-aspartylphosphate). The 94-residue stretch at glycine 821 to isoleucine 914 folds into the HPt domain. Phosphohistidine is present on histidine 860.

As to quaternary structure, may form homomultimers. Seems to interact with TorT and TorC apocytochrome. Post-translationally, activation requires a sequential transfer of a phosphate group from a His in the primary transmitter domain, to an Asp in the receiver domain and to a His in the secondary transmitter domain.

It localises to the cell inner membrane. The enzyme catalyses ATP + protein L-histidine = ADP + protein N-phospho-L-histidine.. Inhibited by TorC apocytochrome. Functionally, member of the two-component regulatory system TorS/TorR involved in the anaerobic utilization of trimethylamine-N-oxide (TMAO). Detects the presence of TMAO in the medium and, in response, activates TorR via a four-step phosphorelay. When TMAO is removed, TorS can dephosphorylate TorR, probably by a reverse phosphorelay involving His-860 and Asp-733. This Escherichia coli (strain K12) protein is Sensor protein TorS (torS).